A 375-amino-acid polypeptide reads, in one-letter code: Succinyl-diaminopimelate desuccinylase (375 aa).

A Zn(2+)-binding site is contributed by histidine 66. The active site involves aspartate 68. Aspartate 99 is a binding site for Zn(2+). Glutamate 133 acts as the Proton acceptor in catalysis. Residues glutamate 134, glutamate 162, and histidine 348 each coordinate Zn(2+).

The protein belongs to the peptidase M20A family. DapE subfamily. As to quaternary structure, homodimer. The cofactor is Zn(2+). Co(2+) is required as a cofactor.

It catalyses the reaction N-succinyl-(2S,6S)-2,6-diaminopimelate + H2O = (2S,6S)-2,6-diaminopimelate + succinate. It functions in the pathway amino-acid biosynthesis; L-lysine biosynthesis via DAP pathway; LL-2,6-diaminopimelate from (S)-tetrahydrodipicolinate (succinylase route): step 3/3. Catalyzes the hydrolysis of N-succinyl-L,L-diaminopimelic acid (SDAP), forming succinate and LL-2,6-diaminopimelate (DAP), an intermediate involved in the bacterial biosynthesis of lysine and meso-diaminopimelic acid, an essential component of bacterial cell walls. The polypeptide is Succinyl-diaminopimelate desuccinylase (Salmonella dublin (strain CT_02021853)).